The primary structure comprises 459 residues: Probable acetate kinase (459 aa).

Asn9 lines the Mg(2+) pocket. Lys16 provides a ligand contact to ATP. Arg100 is a binding site for substrate. Catalysis depends on Asp156, which acts as the Proton donor/acceptor. ATP contacts are provided by residues 216–220 (HLGSG) and 299–301 (DFR). Positions 308 to 338 (TTTSSPTPSPNPNPNPNPDPNPDPNPDPQNQ) are disordered. Pro residues predominate over residues 314 to 334 (TPSPNPNPNPNPDPNPDPNPD). Residue Glu441 participates in Mg(2+) binding.

Belongs to the acetokinase family. The cofactor is Mg(2+).

It catalyses the reaction acetate + ATP = acetyl phosphate + ADP. It functions in the pathway metabolic intermediate biosynthesis; acetyl-CoA biosynthesis; acetyl-CoA from acetate: step 1/2. This Chaetomium globosum (strain ATCC 6205 / CBS 148.51 / DSM 1962 / NBRC 6347 / NRRL 1970) (Soil fungus) protein is Probable acetate kinase.